The primary structure comprises 333 residues: Elongation factor Ts, mitochondrial (333 aa).

The transit peptide at 1 to 17 directs the protein to the mitochondrion; the sequence is MLRTLRPTLPSRCLRLY.

The protein belongs to the EF-Ts family.

The protein localises to the mitochondrion. Functionally, associates with the EF-Tu.GDP complex and induces the exchange of GDP to GTP. It remains bound to the aminoacyl-tRNA.EF-Tu.GTP complex up to the GTP hydrolysis stage on the ribosome. The polypeptide is Elongation factor Ts, mitochondrial (Coprinopsis cinerea (strain Okayama-7 / 130 / ATCC MYA-4618 / FGSC 9003) (Inky cap fungus)).